The chain runs to 476 residues: Glutamate--tRNA ligase 1 (476 aa).

Positions 9 to 19 match the 'HIGH' region motif; sequence PSPTGFLHIGG. The 'KMSKS' region signature appears at 238 to 242; sequence KLSKR. Position 241 (Lys241) interacts with ATP.

Belongs to the class-I aminoacyl-tRNA synthetase family. Glutamate--tRNA ligase type 1 subfamily. Monomer.

Its subcellular location is the cytoplasm. It carries out the reaction tRNA(Glu) + L-glutamate + ATP = L-glutamyl-tRNA(Glu) + AMP + diphosphate. Its function is as follows. Catalyzes the attachment of glutamate to tRNA(Glu) in a two-step reaction: glutamate is first activated by ATP to form Glu-AMP and then transferred to the acceptor end of tRNA(Glu). The sequence is that of Glutamate--tRNA ligase 1 from Bartonella tribocorum (strain CIP 105476 / IBS 506).